The following is a 344-amino-acid chain: L-rhamnose-proton symporter (344 aa).

10 consecutive transmembrane segments (helical) span residues 4 to 24 (AITM…CFYA), 38 to 58 (WSVG…ATLL), 72 to 92 (TLLP…NYGL), 101 to 121 (MGIG…TPII), 131 to 151 (TQGG…VGIV), 175 to 195 (LLLA…MNAA), 214 to 234 (LPSY…FCFI), 259 to 279 (LLLS…YAWG), 290 to 310 (MSWM…GLVL), and 323 to 343 (VLSL…LGMA).

This sequence belongs to the L-rhamnose transporter (TC 2.A.7.6) family.

Its subcellular location is the cell inner membrane. The enzyme catalyses L-rhamnopyranose(in) + H(+)(in) = L-rhamnopyranose(out) + H(+)(out). In terms of biological role, uptake of L-rhamnose across the cytoplasmic membrane with the concomitant transport of protons into the cell (symport system). The sequence is that of L-rhamnose-proton symporter from Klebsiella pneumoniae (strain 342).